The following is a 576-amino-acid chain: MNEKHPGPLVVSGKLSDGERMKSESNFLRGTIAEDLNNGLTGGFSGDNFLLIRFHGMYQQDDRDIRAERAEQKLEPRHAMMLRCRLPGGIITPQQWLGIDKFAADNTLYGSIRITNRQTFQFHGILKGNVKPAHQLLNELGLDALATANDVNRNVLCTSNPVESALHQEAYEWAKKISEHLLPRTRAYAEIWLDAEKVATTDEEPILGATYLPRKFKTTVVIPPQNDVDLHANDLNFVAVADKGKLIGFNVLVGGGLSIAHGDKNTYPRKASEFGYIPLKHTLAIAEAVVTTQRDWGNRTDRKNAKTKYTLERVGVETFKAEVEKRAGVSFSAIKPYQFIGRGDRIGWVKGVDKKWHLTLFVENGRLLDYPGRSLKTGVAEIAKIHQGDFRLTANQNLIVAGVPEKDKARIEALAREHGLMDDNVTSQRENSMACVSFPTCPLAMAEAERFLPEFVTRVEGILQQHGLADEHIVLRVTGCPNGCGRALLAEVGLVGKAVGRYNLHLGGNREGTRIPRMYRENITADEILLITDQLVGRWAKERHVDEGFGDFVIRAGVIAPVIDSARDFYDVQEAM.

4 residues coordinate [4Fe-4S] cluster: Cys-435, Cys-441, Cys-480, and Cys-484. Cys-484 is a siroheme binding site.

Belongs to the nitrite and sulfite reductase 4Fe-4S domain family. Alpha(8)-beta(8). The alpha component is a flavoprotein, the beta component is a hemoprotein. Requires siroheme as cofactor. [4Fe-4S] cluster is required as a cofactor.

It carries out the reaction hydrogen sulfide + 3 NADP(+) + 3 H2O = sulfite + 3 NADPH + 4 H(+). The protein operates within sulfur metabolism; hydrogen sulfide biosynthesis; hydrogen sulfide from sulfite (NADPH route): step 1/1. Its function is as follows. Component of the sulfite reductase complex that catalyzes the 6-electron reduction of sulfite to sulfide. This is one of several activities required for the biosynthesis of L-cysteine from sulfate. In Yersinia pestis bv. Antiqua (strain Antiqua), this protein is Sulfite reductase [NADPH] hemoprotein beta-component.